Here is a 394-residue protein sequence, read N- to C-terminus: Exodeoxyribonuclease 7 large subunit (394 aa).

The protein belongs to the XseA family. Heterooligomer composed of large and small subunits.

Its subcellular location is the cytoplasm. The catalysed reaction is Exonucleolytic cleavage in either 5'- to 3'- or 3'- to 5'-direction to yield nucleoside 5'-phosphates.. Its function is as follows. Bidirectionally degrades single-stranded DNA into large acid-insoluble oligonucleotides, which are then degraded further into small acid-soluble oligonucleotides. This chain is Exodeoxyribonuclease 7 large subunit, found in Thermotoga maritima (strain ATCC 43589 / DSM 3109 / JCM 10099 / NBRC 100826 / MSB8).